We begin with the raw amino-acid sequence, 504 residues long: Plasma protease C1 inhibitor (504 aa).

An N-terminal signal peptide occupies residues 1–22 (MASRLTPLTLLLLLLAGDRAFS). Residues 22-67 (SDPEATSHSTQDPLEAQAKSRESFPERDDSWSPPEPTVLPSTWPTT) are disordered. The segment covering 39-51 (AKSRESFPERDDS) has biased composition (basic and acidic residues). Asparagine 75, asparagine 83, and asparagine 107 each carry an N-linked (GlcNAc...) asparagine glycan. A compositionally biased stretch (polar residues) spans 85-124 (SFSQHSQPAAQLPTDSPGQPPLNSSSQPSTASDLPTQATT). The disordered stretch occupies residues 85 to 141 (SFSQHSQPAAQLPTDSPGQPPLNSSSQPSTASDLPTQATTEPFCPEPLAQCSDSDRD). Intrachain disulfides connect cysteine 128/cysteine 432 and cysteine 135/cysteine 210. Residues asparagine 243 and asparagine 356 are each glycosylated (N-linked (GlcNAc...) asparagine).

The protein belongs to the serpin family. As to quaternary structure, interacts with MASP1.

The protein resides in the secreted. Serine protease inhibitor, which acrs as a regulator of the classical complement pathway. Forms a proteolytically inactive stoichiometric complex with the C1r or C1s proteases. May also regulate blood coagulation, fibrinolysis and the generation of kinins. Very efficient inhibitor of FXIIa. Inhibits chymotrypsin and kallikrein. The protein is Plasma protease C1 inhibitor (Serping1) of Mus musculus (Mouse).